We begin with the raw amino-acid sequence, 349 residues long: 4-hydroxy-3-methylbut-2-enyl diphosphate reductase (349 aa).

C18 provides a ligand contact to [4Fe-4S] cluster. Residues H47 and H83 each contribute to the (2E)-4-hydroxy-3-methylbut-2-enyl diphosphate site. Residues H47 and H83 each contribute to the dimethylallyl diphosphate site. Isopentenyl diphosphate-binding residues include H47 and H83. C105 is a [4Fe-4S] cluster binding site. H133 is a binding site for (2E)-4-hydroxy-3-methylbut-2-enyl diphosphate. H133 provides a ligand contact to dimethylallyl diphosphate. H133 provides a ligand contact to isopentenyl diphosphate. Catalysis depends on E135, which acts as the Proton donor. T174 provides a ligand contact to (2E)-4-hydroxy-3-methylbut-2-enyl diphosphate. C204 lines the [4Fe-4S] cluster pocket. Residues S232, S233, N234, and S277 each coordinate (2E)-4-hydroxy-3-methylbut-2-enyl diphosphate. 4 residues coordinate dimethylallyl diphosphate: S232, S233, N234, and S277. The isopentenyl diphosphate site is built by S232, S233, N234, and S277.

Belongs to the IspH family. It depends on [4Fe-4S] cluster as a cofactor.

It carries out the reaction isopentenyl diphosphate + 2 oxidized [2Fe-2S]-[ferredoxin] + H2O = (2E)-4-hydroxy-3-methylbut-2-enyl diphosphate + 2 reduced [2Fe-2S]-[ferredoxin] + 2 H(+). It catalyses the reaction dimethylallyl diphosphate + 2 oxidized [2Fe-2S]-[ferredoxin] + H2O = (2E)-4-hydroxy-3-methylbut-2-enyl diphosphate + 2 reduced [2Fe-2S]-[ferredoxin] + 2 H(+). Its pathway is isoprenoid biosynthesis; dimethylallyl diphosphate biosynthesis; dimethylallyl diphosphate from (2E)-4-hydroxy-3-methylbutenyl diphosphate: step 1/1. It functions in the pathway isoprenoid biosynthesis; isopentenyl diphosphate biosynthesis via DXP pathway; isopentenyl diphosphate from 1-deoxy-D-xylulose 5-phosphate: step 6/6. Its function is as follows. Catalyzes the conversion of 1-hydroxy-2-methyl-2-(E)-butenyl 4-diphosphate (HMBPP) into a mixture of isopentenyl diphosphate (IPP) and dimethylallyl diphosphate (DMAPP). Acts in the terminal step of the DOXP/MEP pathway for isoprenoid precursor biosynthesis. This Bartonella bacilliformis (strain ATCC 35685 / KC583 / Herrer 020/F12,63) protein is 4-hydroxy-3-methylbut-2-enyl diphosphate reductase.